A 251-amino-acid chain; its full sequence is HTH-type transcriptional regulator UlaR (251 aa).

The region spanning 3 to 58 (EAQRHQILLEMLAQLGFVTVEKVVERLGISPATARRDINKLDESGKLKKVRNGAEA) is the HTH deoR-type domain. The H-T-H motif DNA-binding region spans 20–39 (VTVEKVVERLGISPATARRD).

The protein resides in the cytoplasm. In terms of biological role, represses ulaG and the ulaABCDEF operon. This Escherichia coli O127:H6 (strain E2348/69 / EPEC) protein is HTH-type transcriptional regulator UlaR.